The primary structure comprises 283 residues: Pantothenate synthetase (283 aa).

ATP is bound at residue 34 to 41 (MGALHEGH). The active-site Proton donor is the His-41. A (R)-pantoate-binding site is contributed by Gln-65. Residue Gln-65 coordinates beta-alanine. An ATP-binding site is contributed by 152–155 (GEKD). Gln-158 lines the (R)-pantoate pocket. 189-192 (MSSR) is an ATP binding site.

The protein belongs to the pantothenate synthetase family. As to quaternary structure, homodimer.

It localises to the cytoplasm. The catalysed reaction is (R)-pantoate + beta-alanine + ATP = (R)-pantothenate + AMP + diphosphate + H(+). It functions in the pathway cofactor biosynthesis; (R)-pantothenate biosynthesis; (R)-pantothenate from (R)-pantoate and beta-alanine: step 1/1. Functionally, catalyzes the condensation of pantoate with beta-alanine in an ATP-dependent reaction via a pantoyl-adenylate intermediate. The sequence is that of Pantothenate synthetase from Rhodopseudomonas palustris (strain BisA53).